The primary structure comprises 188 residues: Photosystem I assembly protein Ycf4 (188 aa).

2 consecutive transmembrane segments (helical) span residues 26 to 46 and 68 to 88; these read YFWA…GLSS and LVMG…WFVI.

The protein belongs to the Ycf4 family.

Its subcellular location is the cellular thylakoid membrane. In terms of biological role, seems to be required for the assembly of the photosystem I complex. The protein is Photosystem I assembly protein Ycf4 of Synechococcus elongatus (strain ATCC 33912 / PCC 7942 / FACHB-805) (Anacystis nidulans R2).